The chain runs to 270 residues: Interleukin-1 beta (270 aa).

Positions 1-118 (MATVPEPTSE…VYDDDAFVCD (118 aa)) are excised as a propeptide.

It belongs to the IL-1 family. Monomer. In its precursor form, weakly interacts with full-length MEFV; the mature cytokine does not interact at all. Interacts with integrins ITGAV:ITGBV and ITGA5:ITGB1; integrin-binding is required for IL1B signaling. Interacts with cargo receptor TMED10; the interaction is direct and is required for the secretion of IL1B mature form. Interacts with HSP90AB1; the interaction facilitates cargo translocation into the ERGIC. Interacts with HSP90B1; the interaction facilitates cargo translocation into the ERGIC.

It localises to the cytoplasm. The protein resides in the cytosol. The protein localises to the secreted. Its subcellular location is the lysosome. It is found in the extracellular exosome. Its function is as follows. Potent pro-inflammatory cytokine. Initially discovered as the major endogenous pyrogen, induces prostaglandin synthesis, neutrophil influx and activation, T-cell activation and cytokine production, B-cell activation and antibody production, and fibroblast proliferation and collagen production. Promotes Th17 differentiation of T-cells. Synergizes with IL12/interleukin-12 to induce IFNG synthesis from T-helper 1 (Th1) cells. Plays a role in angiogenesis by inducing VEGF production synergistically with TNF and IL6. Involved in transduction of inflammation downstream of pyroptosis: its mature form is specifically released in the extracellular milieu by passing through the gasdermin-D (GSDMD) pore. The protein is Interleukin-1 beta (IL1B) of Eumetopias jubatus (Steller sea lion).